The primary structure comprises 120 residues: BLOC-1-related complex subunit 8 (120 aa).

The tract at residues 101-120 is disordered; sequence MNTSAQGHSQEKLSPPPSLA. Ser109 bears the Phosphoserine mark.

It belongs to the BORCS8 family. Component of the BLOC-one-related complex (BORC) which is composed of BLOC1S1, BLOC1S2, BORCS5, BORCS6, BORCS7, BORCS8, KXD1 and SNAPIN.

The protein resides in the lysosome membrane. In terms of biological role, as part of the BLOC-one-related complex (BORC), it plays a role in the movement and localization of lysosomes at the cell periphery. Associated with the cytosolic face of lysosomes, BORC recruits ARL8B to the lysosomal membrane and couples lysosomes to microtubule plus-end-directed kinesin motors, driving lysosome movement toward the cell periphery. This is BLOC-1-related complex subunit 8 from Mus musculus (Mouse).